The primary structure comprises 321 residues: Gap junction delta-2 protein (321 aa).

Topologically, residues 1 to 19 (MGEWTILERLLEAAVQQHS) are cytoplasmic. The chain crosses the membrane as a helical span at residues 20–42 (TMIGRILLTVVVIFRILIVAIVG). Residues 43 to 75 (ETVYDDEQTMFVCNTLQPGCNQACYDRAFPISH) are Extracellular-facing. The chain crosses the membrane as a helical span at residues 76-98 (IRYWVFQIIMVCTPSLCFITYSV). Residues 99–197 (HQSAKQRERR…KLRRQEGISR (99 aa)) are Cytoplasmic-facing. A disordered region spans residues 120–141 (PAESIGGPGGTGGGGSGGSKRE). Positions 125–137 (GGPGGTGGGGSGG) are enriched in gly residues. The chain crosses the membrane as a helical span at residues 198–220 (FYIIQVVFRNALEIGFLVGQYFL). At 221 to 252 (YGFSVPGLYECNRYPCIKEVECYVSRPTEKTV) the chain is on the extracellular side. Residues 253 to 275 (FLVFMFAVSGICVVLNLAELNHL) form a helical membrane-spanning segment. The Cytoplasmic segment spans residues 276–321 (GWRKIKLAVRGAQAKRKSVYEIRNKDLPRVSVPNFGRTQSSDSAYV).

It belongs to the connexin family. Delta-type subfamily. As to quaternary structure, a connexon is composed of a hexamer of connexins. As to expression, highly expressed in neurons.

The protein localises to the cell membrane. The protein resides in the cell junction. Its subcellular location is the gap junction. Its function is as follows. One gap junction consists of a cluster of closely packed pairs of transmembrane channels, the connexons, through which materials of low MW diffuse from one cell to a neighboring cell. This Rattus norvegicus (Rat) protein is Gap junction delta-2 protein (Gjd2).